Consider the following 262-residue polypeptide: Thiamine thiazole synthase (262 aa).

Residues serine 40, 59-60 (ER), glycine 67, valine 133, and 159-161 (HID) each bind NAD(+). Aspartate 161 and histidine 176 together coordinate Fe cation. Residues serine 179 and methionine 226 each coordinate NAD(+). Arginine 236 contributes to the glycine binding site.

The protein belongs to the THI4 family. In terms of assembly, homooctamer; tetramer of dimers. Requires Fe(2+) as cofactor.

It carries out the reaction hydrogen sulfide + glycine + NAD(+) = ADP-5-ethyl-4-methylthiazole-2-carboxylate + nicotinamide + 3 H2O + H(+). It functions in the pathway cofactor biosynthesis; thiamine diphosphate biosynthesis. Its function is as follows. Involved in the biosynthesis of the thiazole moiety of thiamine. Catalyzes the conversion of NAD and glycine to adenosine diphosphate 5-(2-hydroxyethyl)-4-methylthiazole-2-carboxylate (ADT), an adenylated thiazole intermediate, using free sulfide as a source of sulfur. This Methanococcus maripaludis (strain C7 / ATCC BAA-1331) protein is Thiamine thiazole synthase.